The following is a 169-amino-acid chain: Succinate dehydrogenase cytochrome b560 subunit, mitochondrial (169 aa).

Residues 1 to 29 constitute a mitochondrion transit peptide; it reads MAAFLLRHVSRHCLRAHLNAQLCIRNAAP. The Mitochondrial matrix segment spans residues 30 to 62; sequence LGTTAKEEMERFWKKNTSSNRPLSPHLTIYKWS. The helical transmembrane segment at 63–92 threads the bilayer; that stretch reads LPMALSVCHRGSGIALSGGVSLFGLSALLL. The Mitochondrial intermembrane segment spans residues 93–112; it reads PGNFESYLMFVKSLCLGPTL. A helical transmembrane segment spans residues 113–137; the sequence is IYSAKFVLVFPLMYHSLNGIRHLLW. H127 is a binding site for heme b. Topologically, residues 138–144 are mitochondrial matrix; sequence DLGKGLA. A helical transmembrane segment spans residues 145-166; that stretch reads IPQVWLSGVAVVVLAVLSSGGL. Residues 167–169 lie on the Mitochondrial intermembrane side of the membrane; that stretch reads AAL.

This sequence belongs to the cytochrome b560 family. Component of complex II composed of four subunits: the flavoprotein (FP) SDHA, iron-sulfur protein (IP) SDHB, and a cytochrome b560 composed of SDHC and SDHD. Heme b serves as cofactor.

It localises to the mitochondrion inner membrane. It participates in carbohydrate metabolism; tricarboxylic acid cycle. Membrane-anchoring subunit of succinate dehydrogenase (SDH) that is involved in complex II of the mitochondrial electron transport chain and is responsible for transferring electrons from succinate to ubiquinone (coenzyme Q). SDH also oxidizes malate to the non-canonical enol form of oxaloacetate, enol-oxaloacetate. Enol-oxaloacetate, which is a potent inhibitor of the succinate dehydrogenase activity, is further isomerized into keto-oxaloacetate. The sequence is that of Succinate dehydrogenase cytochrome b560 subunit, mitochondrial (Sdhc) from Mus musculus (Mouse).